The primary structure comprises 303 residues: uncharacterized protein (303 aa).

The HTH araC/xylS-type domain maps to 183–281 (KDILFYLNNN…GCSPSDYRRQ (99 aa)). 2 DNA-binding regions (H-T-H motif) span residues 200-221 (EQLSKKFRASVSYICHEFTKEY) and 248-271 (QAEISWRVGYENVDHFAKLFLRHV).

This is an uncharacterized protein from Escherichia coli (strain K12).